The chain runs to 247 residues: Segregation and condensation protein A (247 aa).

Belongs to the ScpA family. Component of a cohesin-like complex composed of ScpA, ScpB and the Smc homodimer, in which ScpA and ScpB bind to the head domain of Smc. The presence of the three proteins is required for the association of the complex with DNA.

It is found in the cytoplasm. Participates in chromosomal partition during cell division. May act via the formation of a condensin-like complex containing Smc and ScpB that pull DNA away from mid-cell into both cell halves. In Bacillus cereus (strain ATCC 10987 / NRS 248), this protein is Segregation and condensation protein A.